We begin with the raw amino-acid sequence, 257 residues long: Hydroxyacylglutathione hydrolase (257 aa).

Positions 54, 56, 58, 59, 110, 131, and 169 each coordinate Zn(2+).

This sequence belongs to the metallo-beta-lactamase superfamily. Glyoxalase II family. As to quaternary structure, monomer. Zn(2+) serves as cofactor.

It catalyses the reaction an S-(2-hydroxyacyl)glutathione + H2O = a 2-hydroxy carboxylate + glutathione + H(+). Its pathway is secondary metabolite metabolism; methylglyoxal degradation; (R)-lactate from methylglyoxal: step 2/2. Functionally, thiolesterase that catalyzes the hydrolysis of S-D-lactoyl-glutathione to form glutathione and D-lactic acid. In Hahella chejuensis (strain KCTC 2396), this protein is Hydroxyacylglutathione hydrolase.